We begin with the raw amino-acid sequence, 532 residues long: Methionine--tRNA ligase (532 aa).

Residues 16 to 26 (YYVNDVPHLGS) carry the 'HIGH' region motif. Residues C131, C134, C149, and H152 each contribute to the Zn(2+) site. The 'KMSKS' region signature appears at 305 to 309 (KMGKS). K308 contacts ATP.

Belongs to the class-I aminoacyl-tRNA synthetase family. MetG type 2A subfamily. Monomer. Zn(2+) is required as a cofactor.

It is found in the cytoplasm. The enzyme catalyses tRNA(Met) + L-methionine + ATP = L-methionyl-tRNA(Met) + AMP + diphosphate. Functionally, is required not only for elongation of protein synthesis but also for the initiation of all mRNA translation through initiator tRNA(fMet) aminoacylation. This chain is Methionine--tRNA ligase (metG), found in Synechocystis sp. (strain ATCC 27184 / PCC 6803 / Kazusa).